A 701-amino-acid polypeptide reads, in one-letter code: Mediator of RNA polymerase II transcription subunit 25 (701 aa).

Disordered stretches follow at residues 277–388 (AAQK…GAQQ) and 580–617 (AAATGNQQAPVTGAPPNQVQGQAQAPGGGMLRLQNPGA). Positions 286-306 (ANQQQKNRFGQISTPPFSQSP) are enriched in polar residues. 2 stretches are compositionally biased toward low complexity: residues 314-367 (PSLS…NNQQ) and 593-604 (APPNQVQGQAQA). The LXXLL motif signature appears at 621–625 (LRSLL). The segment at 650–689 (APGGGAQMQPQWRQPHQGPLMVPTGPRGPVTQNPGMPSVS) is disordered. Residues 679–689 (VTQNPGMPSVS) show a composition bias toward polar residues.

The protein belongs to the Mediator complex subunit 25 family. As to quaternary structure, component of the Mediator complex.

The protein localises to the nucleus. In terms of biological role, component of the Mediator complex, a coactivator involved in the regulated transcription of nearly all RNA polymerase II-dependent genes. Mediator functions as a bridge to convey information from gene-specific regulatory proteins to the basal RNA polymerase II transcription machinery. Mediator is recruited to promoters by direct interactions with regulatory proteins and serves as a scaffold for the assembly of a functional preinitiation complex with RNA polymerase II and the general transcription factors. This is Mediator of RNA polymerase II transcription subunit 25 (med25) from Danio rerio (Zebrafish).